Reading from the N-terminus, the 439-residue chain is Structure-specific endonuclease subunit SLX1 homolog (439 aa).

Disordered regions lie at residues Met1–Lys28 and Asp117–Leu140. The segment covering Glu125 to Asn136 has biased composition (basic and acidic residues). In terms of domain architecture, GIY-YIG spans Glu166–Lys253. The SLX1-type zinc finger occupies Cys335 to Cys390.

The protein belongs to the SLX1 family. In terms of assembly, forms a heterodimer with him-18/slx-4. The cofactor is a divalent metal cation.

It localises to the nucleus. In terms of biological role, catalytic subunit of a heterodimeric structure-specific endonuclease that resolves DNA secondary structures generated during DNA repair and recombination. Has endonuclease activity towards branched DNA substrates, introducing single-strand cuts in duplex DNA close to junctions with ss-DNA (Potential). Has a preference for replication forks over 5' flap structures or Holliday junctions and shows much lower activity toward 3' flap structures. Required for proper crossover distribution through inhibition of crossover formation at the central region of chromosomes. The polypeptide is Structure-specific endonuclease subunit SLX1 homolog (Caenorhabditis briggsae).